Consider the following 755-residue polypeptide: Kojibiose phosphorylase (755 aa).

Residue Trp333–Asp334 participates in substrate binding. Residue Glu473 is the Proton donor of the active site. Lys573–Gln574 serves as a coordination point for substrate.

This sequence belongs to the glycosyl hydrolase 65 family.

It carries out the reaction kojibiose + phosphate = beta-D-glucose 1-phosphate + D-glucose. Functionally, in vitro catalyzes the phosphorolysis of D-kojibiose into beta-D-glucose 1-phosphate and D-glucose. No other disaccharides tested substitute for D-kojibiose. In the reverse direction disaccharides can be formed from beta-D-glucose 1-phosphate plus D-glucose, L-sorbose, D-sorbitol, L-iditol or 1,5-anhydro-D-glucitol, but with low efficiency. The beta-D-glucose 1-phosphate product is the substrate for YcjU (AC P77366), the next apparent enzyme in the putative biochemical pathway encoded in this locus (yjcM to ycjW). This Escherichia coli (strain K12) protein is Kojibiose phosphorylase (ycjT).